A 303-amino-acid polypeptide reads, in one-letter code: Geranylgeranyl pyrophosphate synthase (303 aa).

Positions 30, 33, and 62 each coordinate isopentenyl diphosphate. Positions 69 and 73 each coordinate Mg(2+). Residue Arg-78 coordinates dimethylallyl diphosphate. Position 79 (Arg-79) interacts with isopentenyl diphosphate. Dimethylallyl diphosphate contacts are provided by Lys-156, Thr-157, Gln-190, Lys-207, and Lys-217.

The protein belongs to the FPP/GGPP synthase family. Mg(2+) serves as cofactor.

It localises to the cytoplasm. The enzyme catalyses isopentenyl diphosphate + dimethylallyl diphosphate = (2E)-geranyl diphosphate + diphosphate. It catalyses the reaction isopentenyl diphosphate + (2E)-geranyl diphosphate = (2E,6E)-farnesyl diphosphate + diphosphate. It carries out the reaction isopentenyl diphosphate + (2E,6E)-farnesyl diphosphate = (2E,6E,10E)-geranylgeranyl diphosphate + diphosphate. Its pathway is isoprenoid biosynthesis; farnesyl diphosphate biosynthesis; farnesyl diphosphate from geranyl diphosphate and isopentenyl diphosphate: step 1/1. It functions in the pathway isoprenoid biosynthesis; geranyl diphosphate biosynthesis; geranyl diphosphate from dimethylallyl diphosphate and isopentenyl diphosphate: step 1/1. The protein operates within isoprenoid biosynthesis; geranylgeranyl diphosphate biosynthesis; geranylgeranyl diphosphate from farnesyl diphosphate and isopentenyl diphosphate: step 1/1. In terms of biological role, catalyzes the trans-addition of the three molecules of IPP onto DMAPP to form geranylgeranyl pyrophosphate. This is Geranylgeranyl pyrophosphate synthase from Mucor circinelloides f. lusitanicus (Mucor racemosus var. lusitanicus).